The sequence spans 351 residues: N-acetyl-gamma-glutamyl-phosphate reductase (351 aa).

Residue cysteine 154 is part of the active site.

Belongs to the NAGSA dehydrogenase family. Type 1 subfamily.

The protein localises to the cytoplasm. The enzyme catalyses N-acetyl-L-glutamate 5-semialdehyde + phosphate + NADP(+) = N-acetyl-L-glutamyl 5-phosphate + NADPH + H(+). It functions in the pathway amino-acid biosynthesis; L-arginine biosynthesis; N(2)-acetyl-L-ornithine from L-glutamate: step 3/4. Its function is as follows. Catalyzes the NADPH-dependent reduction of N-acetyl-5-glutamyl phosphate to yield N-acetyl-L-glutamate 5-semialdehyde. The chain is N-acetyl-gamma-glutamyl-phosphate reductase from Prochlorococcus marinus (strain MIT 9312).